The sequence spans 103 residues: Small ribosomal subunit protein uS10 (103 aa).

This sequence belongs to the universal ribosomal protein uS10 family. Part of the 30S ribosomal subunit.

Involved in the binding of tRNA to the ribosomes. This chain is Small ribosomal subunit protein uS10, found in Borrelia duttonii (strain Ly).